A 61-amino-acid polypeptide reads, in one-letter code: Progonadoliberin-1 (61 aa).

The residue at position 1 (Gln-1) is a Pyrrolidone carboxylic acid. Gly-10 carries the glycine amide modification.

The protein belongs to the GnRH family.

It is found in the secreted. In terms of biological role, stimulates the secretion of gonadotropins; it stimulates the secretion of both luteinizing and follicle-stimulating hormones. This chain is Progonadoliberin-1 (GNRH1), found in Ovis aries (Sheep).